The chain runs to 220 residues: Fructose-6-phosphate aldolase (220 aa).

Lysine 85 functions as the Schiff-base intermediate with substrate in the catalytic mechanism.

This sequence belongs to the transaldolase family. Type 3A subfamily. As to quaternary structure, homodecamer.

The protein localises to the cytoplasm. It carries out the reaction beta-D-fructose 6-phosphate = dihydroxyacetone + D-glyceraldehyde 3-phosphate. Functionally, catalyzes the reversible formation of fructose 6-phosphate from dihydroxyacetone and D-glyceraldehyde 3-phosphate via an aldolization reaction. The chain is Fructose-6-phosphate aldolase from Salmonella gallinarum (strain 287/91 / NCTC 13346).